Reading from the N-terminus, the 827-residue chain is Periplasmic nitrate reductase (827 aa).

Residues 1 to 32 (MTLSRRAFIKQTAAATAASAAGVVLPGVDALA) constitute a signal peptide (tat-type signal). The 4Fe-4S Mo/W bis-MGD-type domain occupies 37-93 (LTWSKAPCRFCGTGCGVSVGVKNGKVVATQGDPQAEVNRGLNCVKGYFLSKIMYGQD). [4Fe-4S] cluster contacts are provided by Cys-44, Cys-47, Cys-51, and Cys-79. Residues Lys-81, Gln-148, Asn-173, Cys-177, 241–245 (STFEH), 260–262 (QSD), Met-371, Gln-375, Asn-481, 507–508 (SD), Lys-530, Asp-557, and 717–726 (TGRVLEHWHS) each bind Mo-bis(molybdopterin guanine dinucleotide). Trp-793 is a binding site for substrate. Mo-bis(molybdopterin guanine dinucleotide) contacts are provided by Asn-801 and Lys-818.

This sequence belongs to the prokaryotic molybdopterin-containing oxidoreductase family. NasA/NapA/NarB subfamily. In terms of assembly, component of the periplasmic nitrate reductase NapAB complex composed of NapA and NapB. Requires [4Fe-4S] cluster as cofactor. The cofactor is Mo-bis(molybdopterin guanine dinucleotide). Post-translationally, predicted to be exported by the Tat system. The position of the signal peptide cleavage has not been experimentally proven.

It localises to the periplasm. It carries out the reaction 2 Fe(II)-[cytochrome] + nitrate + 2 H(+) = 2 Fe(III)-[cytochrome] + nitrite + H2O. Catalytic subunit of the periplasmic nitrate reductase complex NapAB. Receives electrons from NapB and catalyzes the reduction of nitrate to nitrite. The polypeptide is Periplasmic nitrate reductase (Paraburkholderia xenovorans (strain LB400)).